Here is a 677-residue protein sequence, read N- to C-terminus: UvrABC system protein B (677 aa).

Residues 31–417 (DRIESGETDI…SDGVVEQIIR (387 aa)) enclose the Helicase ATP-binding domain. 44–51 (GATGTGKS) contributes to the ATP binding site. A Beta-hairpin motif is present at residues 97–120 (YYDYYQPEAYVPKTDTFIEKDASV). The Helicase C-terminal domain occupies 434 to 596 (QIDDLLEEIR…VTPVPIKKTV (163 aa)). The UVR domain maps to 629–664 (KSHIKSLEAKMYMAAESLMFEEAAELRDEIQSLKEK).

The protein belongs to the UvrB family. Forms a heterotetramer with UvrA during the search for lesions. Interacts with UvrC in an incision complex.

The protein localises to the cytoplasm. Its function is as follows. The UvrABC repair system catalyzes the recognition and processing of DNA lesions. A damage recognition complex composed of 2 UvrA and 2 UvrB subunits scans DNA for abnormalities. Upon binding of the UvrA(2)B(2) complex to a putative damaged site, the DNA wraps around one UvrB monomer. DNA wrap is dependent on ATP binding by UvrB and probably causes local melting of the DNA helix, facilitating insertion of UvrB beta-hairpin between the DNA strands. Then UvrB probes one DNA strand for the presence of a lesion. If a lesion is found the UvrA subunits dissociate and the UvrB-DNA preincision complex is formed. This complex is subsequently bound by UvrC and the second UvrB is released. If no lesion is found, the DNA wraps around the other UvrB subunit that will check the other stand for damage. The chain is UvrABC system protein B from Tropheryma whipplei (strain TW08/27) (Whipple's bacillus).